The sequence spans 288 residues: Nucleotide-binding protein ASA_0318 (288 aa).

Position 8-15 (8-15 (GRSGSGKT)) interacts with ATP. Residue 56-59 (DVRN) coordinates GTP.

Belongs to the RapZ-like family.

Displays ATPase and GTPase activities. In Aeromonas salmonicida (strain A449), this protein is Nucleotide-binding protein ASA_0318.